Consider the following 661-residue polypeptide: Envelope glycoprotein (661 aa).

A signal peptide spans M1–A33. The receptor-binding domain (RBD) stretch occupies residues L32–P267. Residues S34–L606 lie on the Extracellular side of the membrane. N-linked (GlcNAc...) asparagine; by host glycosylation is present at N43. 5 cysteine pairs are disulfide-bonded: C77–C129, C103–C118, C104–C114, C152–C172, and C164–C177. Residue H86 coordinates Zn(2+). Position 117 (D117) interacts with Zn(2+). N199 carries an N-linked (GlcNAc...) asparagine; by host glycan. A disulfide bond links C209 and C215. The interval I268–D308 is disordered. The span at P280–P301 shows a compositional bias: pro residues. N322 is a glycosylation site (N-linked (GlcNAc...) asparagine; by host). 6 cysteine pairs are disulfide-bonded: C332/C335, C332/C559, C362/C416, C381/C393, C423/C436, and C551/C558. The short motif at C332–C335 is the CXXC element. The N-linked (GlcNAc...) asparagine; by host glycan is linked to N361. 2 N-linked (GlcNAc...) asparagine; by host glycosylation sites follow: N394 and N430. Positions V468 to V488 are fusion peptide. Residues A497 to V533 adopt a coiled-coil conformation. The interval L534–L550 is immunosuppression. Residues C551–C559 carry the CX6CC motif. A helical membrane pass occupies residues I607–I627. A lipid anchor (S-palmitoyl cysteine; by host) is attached at C626. The Cytoplasmic portion of the chain corresponds to L628–P661. The YXXL motif; contains endocytosis signal signature appears at Y651–L654.

The mature envelope protein (Env) consists of a trimer of SU-TM heterodimers attached by a labile interchain disulfide bond. Specific enzymatic cleavages in vivo yield mature proteins. Envelope glycoproteins are synthesized as an inactive precursor that is N-glycosylated and processed likely by host cell furin or by a furin-like protease in the Golgi to yield the mature SU and TM proteins. The cleavage site between SU and TM requires the minimal sequence [KR]-X-[KR]-R. The R-peptide is released from the C-terminus of the cytoplasmic tail of the TM protein upon particle formation as a result of proteolytic cleavage by the viral protease. Cleavage of this peptide is required for TM to become fusogenic. Post-translationally, the CXXC motif is highly conserved across a broad range of retroviral envelope proteins. It is thought to participate in the formation of a labile disulfide bond possibly with the CX6CC motif present in the transmembrane protein. Isomerization of the intersubunit disulfide bond to an SU intrachain disulfide bond is thought to occur upon receptor recognition in order to allow membrane fusion. In terms of processing, the transmembrane protein is palmitoylated. The R-peptide is palmitoylated.

It localises to the virion membrane. Its subcellular location is the host cell membrane. Functionally, the surface protein (SU) attaches the virus to the host cell by binding to its receptor. This interaction triggers the refolding of the transmembrane protein (TM) and is thought to activate its fusogenic potential by unmasking its fusion peptide. Fusion occurs at the host cell plasma membrane. In terms of biological role, the transmembrane protein (TM) acts as a class I viral fusion protein. Under the current model, the protein has at least 3 conformational states: pre-fusion native state, pre-hairpin intermediate state, and post-fusion hairpin state. During viral and target cell membrane fusion, the coiled coil regions (heptad repeats) assume a trimer-of-hairpins structure, positioning the fusion peptide in close proximity to the C-terminal region of the ectodomain. The formation of this structure appears to drive apposition and subsequent fusion of viral and target cell membranes. Membranes fusion leads to delivery of the nucleocapsid into the cytoplasm. The chain is Envelope glycoprotein (env) from Mus musculus (Mouse).